The sequence spans 63 residues: Prokaryotic ubiquitin-like protein Pup (63 aa).

Residues 1–28 form a disordered region; the sequence is MPQEFEQIRSADQPLDSEESAPVAGART. Residues 19 to 57 form an ARC ATPase binding region; the sequence is ESAPVAGARTDDTVDALDAVLDDIESVLETNAEEYVGSF. Glu-63 participates in a covalent cross-link: Isoglutamyl lysine isopeptide (Glu-Lys) (interchain with K-? in acceptor proteins).

Belongs to the prokaryotic ubiquitin-like protein family. As to quaternary structure, strongly interacts with the proteasome-associated ATPase ARC through a hydrophobic interface; the interacting region of Pup lies in its C-terminal half. There is one Pup binding site per ARC hexamer ring.

The protein operates within protein degradation; proteasomal Pup-dependent pathway. In terms of biological role, protein modifier that is covalently attached to lysine residues of substrate proteins, thereby targeting them for proteasomal degradation. The tagging system is termed pupylation. The protein is Prokaryotic ubiquitin-like protein Pup of Bifidobacterium dentium (strain ATCC 27534 / DSM 20436 / JCM 1195 / Bd1).